Here is a 248-residue protein sequence, read N- to C-terminus: Opiorphin prepropeptide (248 aa).

The first 21 residues, 1–21 (MKLTFFLGLLALISCFTPSES), serve as a signal peptide directing secretion. Position 22 is a pyrrolidone carboxylic acid (Gln22). The interval 150–198 (DTTITTNPPTTATATTSTSTKPTMTISSSTVPISSTPEPATSISAATPA) is disordered. The N-linked (GlcNAc...) asparagine glycan is linked to Asn218.

Belongs to the PROL1/PROL3 family. As to expression, abundantly expressed in lacrimal gland where it found in the secretory endpieces. Also expressed at modest levels in the submandibular gland.

Its subcellular location is the secreted. In terms of biological role, opiorphin is an endogenous inhibitor of neprilysin and aminopeptidase N. Inhibits the breakdown of substance P, Mca-BK2 and Met-enkephalin by neprilysin in vitro with IC(50) values of 29 uM, 33 uM and 33 uM respectively. Inhibits the breakdown of Ala-pNA by aminopeptidase N in vitro with an IC(50) of 65 uM. Has a potent analgesic effect when administered to rats by intravenous injection. This is Opiorphin prepropeptide from Homo sapiens (Human).